The sequence spans 317 residues: uncharacterized protein (317 aa).

The HTH lysR-type domain occupies 29–86 (IDLNLLTIFEAVYVHKGIVNAAKVLNLTPSAISQSIQKLRVIFPDPLFIRKGQGVTPT). The H-T-H motif DNA-binding region spans 46–65 (IVNAAKVLNLTPSAISQSIQ).

It belongs to the LysR transcriptional regulatory family.

This is an uncharacterized protein from Escherichia coli (strain K12).